The sequence spans 393 residues: Arginine biosynthesis bifunctional protein ArgJ (393 aa).

The substrate site is built by threonine 143, lysine 168, threonine 179, glutamate 265, asparagine 388, and threonine 393. Residue threonine 179 is the Nucleophile of the active site.

The protein belongs to the ArgJ family. Heterotetramer of two alpha and two beta chains.

It localises to the cytoplasm. The enzyme catalyses N(2)-acetyl-L-ornithine + L-glutamate = N-acetyl-L-glutamate + L-ornithine. It carries out the reaction L-glutamate + acetyl-CoA = N-acetyl-L-glutamate + CoA + H(+). The protein operates within amino-acid biosynthesis; L-arginine biosynthesis; L-ornithine and N-acetyl-L-glutamate from L-glutamate and N(2)-acetyl-L-ornithine (cyclic): step 1/1. Its pathway is amino-acid biosynthesis; L-arginine biosynthesis; N(2)-acetyl-L-ornithine from L-glutamate: step 1/4. Functionally, catalyzes two activities which are involved in the cyclic version of arginine biosynthesis: the synthesis of N-acetylglutamate from glutamate and acetyl-CoA as the acetyl donor, and of ornithine by transacetylation between N(2)-acetylornithine and glutamate. In Syntrophotalea carbinolica (strain DSM 2380 / NBRC 103641 / GraBd1) (Pelobacter carbinolicus), this protein is Arginine biosynthesis bifunctional protein ArgJ.